Here is a 191-residue protein sequence, read N- to C-terminus: Small ribosomal subunit protein uS10c (191 aa).

The N-terminal 56 residues, 1–56, are a transit peptide targeting the chloroplast; the sequence is MAVSTVSSFLLPSFGIPSSSPSSTRLKVSLLPSSSTHGGLSSCVLTKPSVSLTKVF.

It belongs to the universal ribosomal protein uS10 family. Part of the 30S ribosomal subunit.

Its subcellular location is the plastid. The protein localises to the chloroplast. This chain is Small ribosomal subunit protein uS10c (RPS10), found in Arabidopsis thaliana (Mouse-ear cress).